The sequence spans 184 residues: Dirigent protein 14 (184 aa).

The first 20 residues, 1–20, serve as a signal peptide directing secretion; it reads MANQIYLFSLICLSVLLCQS. Cys-36 and Cys-182 are joined by a disulfide. 2 N-linked (GlcNAc...) asparagine glycosylation sites follow: Asn-55 and Asn-119.

It belongs to the plant dirigent protein family. In terms of assembly, homodimer.

It localises to the secreted. It is found in the extracellular space. Its subcellular location is the apoplast. In terms of biological role, dirigent proteins impart stereoselectivity on the phenoxy radical-coupling reaction, yielding optically active lignans from two molecules of coniferyl alcohol in the biosynthesis of lignans, flavonolignans, and alkaloids and thus plays a central role in plant secondary metabolism. This is Dirigent protein 14 (DIR14) from Arabidopsis thaliana (Mouse-ear cress).